The following is a 416-amino-acid chain: Transcription factor caaR (416 aa).

Positions 13 to 44 (CDRCYAQKLRCPRPSTNDDASCIRCLRQKVQC) form a DNA-binding region, zn(2)-C6 fungal-type. Disordered regions lie at residues 68–90 (ATAG…SDTA) and 130–150 (QPPP…GLDN). A compositionally biased stretch (pro residues) spans 130–141 (QPPPLDTTPPPR). Helical transmembrane passes span 249 to 269 (VIYH…ATLL) and 302 to 322 (SAPS…TYFL).

Its subcellular location is the membrane. It is found in the nucleus. In terms of biological role, transcription factor that positively regulates the expression of the gene cluster that mediates the biosynthesis of the acyltetronic acid derivatives carlosic acid, agglomerin F and carlosic acid methyl ether. The protein is Transcription factor caaR of Aspergillus niger (strain ATCC MYA-4892 / CBS 513.88 / FGSC A1513).